A 179-amino-acid polypeptide reads, in one-letter code: Large ribosomal subunit protein uL6 (179 aa).

It belongs to the universal ribosomal protein uL6 family. In terms of assembly, part of the 50S ribosomal subunit.

This protein binds to the 23S rRNA, and is important in its secondary structure. It is located near the subunit interface in the base of the L7/L12 stalk, and near the tRNA binding site of the peptidyltransferase center. The chain is Large ribosomal subunit protein uL6 from Chloroherpeton thalassium (strain ATCC 35110 / GB-78).